Reading from the N-terminus, the 527-residue chain is MSLCGARANAKMMAAYNGGTSAAAAGHHHHHHHHLPHLPPPHLHHHHHPQHHLHPGSAAAVHPVQQHTSSAAAAAAAAAAAAAMLNPGQQQPYFPSPAPGQAPGPAAAAPAQVQAAAAATVKAHHHQHSHHPQQQLDIEPDRPIGYGAFGVVWSVTDPRDGKRVALKKMPNVFQNLVSCKRVFRELKMLCFFKHDNVLSALDILQPPHIDYFEEIYVVTELMQSDLHKIIVSPQPLSSDHVKVFLYQILRGLKYLHSAGILHRDIKPGNLLVNSNCVLKICDFGLARVEELDESRHMTQEVVTQYYRAPEILMGSRHYSNAIDIWSVGCIFAELLGRRILFQAQSPIQQLDLITDLLGTPSLEAMRTACEGAKAHILRGPHKQPSLPVLYTLSSQATHEAVHLLCRMLVFDPSKRISAKDALAHPYLDEGRLRYHTCMCKCCFSTSTGRVYTSDFEPVTNPKFDDTFEKNLSSVRQVKEIIHQFILEQQKGNRVPLCINPQSAAFKSFISSTVAQPSEMPPSPLVWE.

Sufficient for interaction with DAPK3 stretches follow at residues 1–125 (MSLC…KAHH) and 124–416 (HHHQ…SKRI). Required for interaction with TAB2 regions lie at residues 1-304 (MSLC…VVTQ) and 434-527 (YHTC…LVWE). Disordered regions lie at residues 22 to 72 (AAAA…SSAA) and 90 to 140 (QQPY…DIEP). Residues 26-54 (GHHHHHHHHLPHLPPPHLHHHHHPQHHLH) are compositionally biased toward basic residues. Positions 103 to 119 (PGPAAAAPAQVQAAAAA) are enriched in low complexity. Residues 122 to 131 (KAHHHQHSHH) show a composition bias toward basic residues. Residues 138-427 (IEPDRPIGYG…AKDALAHPYL (290 aa)) enclose the Protein kinase domain. ATP is bound by residues 144 to 152 (IGYGAFGVV) and Lys167. Asp264 (proton acceptor) is an active-site residue. Position 298 is a phosphothreonine; by autocatalysis (Thr298). The TQE motif lies at 298 to 300 (TQE). Positions 428–527 (DEGRLRYHTC…EMPPSPLVWE (100 aa)) are required for homodimerization and kinase activation and localization to the nucleus. At Ser522 the chain carries Phosphoserine.

The protein belongs to the protein kinase superfamily. CMGC Ser/Thr protein kinase family. MAP kinase subfamily. As to quaternary structure, homodimer. Homodimerization is required for intermolecular autophosphorylation, kinase activation and nuclear localization. May interact with components of cullin-RING-based SCF (SKP1-CUL1-F-box protein) E3 ubiquitin-protein ligase complexes. Interacts with LEF1, MEF2A, MYBL1 and MYBL2. Interacts with the upstream activating kinases HIPK2 and MAP3K7/TAK1. Interaction with MAP3K7/TAK1 seems to be indirect, and may be mediated by other proteins such as STAT3, TAB1 and TAB2. Interacts with and phosphorylates a number of transcription factors including FOXO1, FOXO3, FOXO4, MYB, NOTCH1 and TCF7L2/TCF4. Interacts with DAPK3/ZIPK, and this interaction may disrupt interaction with transcription factors such as TCF7L2/TCF4. Interacts with RNF138/NARF. Interacts with ATF5; the interaction stabilizes ATF5 at the protein level in a kinase-independent manner. Mg(2+) is required as a cofactor. Post-translationally, phosphorylated on Thr-298. Intermolecular autophosphorylation on Thr-298 activates the enzyme.

Its subcellular location is the nucleus. The protein resides in the cytoplasm. It carries out the reaction L-seryl-[protein] + ATP = O-phospho-L-seryl-[protein] + ADP + H(+). The catalysed reaction is L-threonyl-[protein] + ATP = O-phospho-L-threonyl-[protein] + ADP + H(+). Activated by dimerization and subsequent intermolecular autophosphorylation on Thr-298. Activated by the non-canonical Wnt signaling pathway, in which WNT5A treatment leads to activation of MAP3K7/TAK1 and HIPK2, which subsequently phosphorylates and activates this protein. Other cytokines such as IL6 may also activate this regulatory circuit. In terms of biological role, serine/threonine-protein kinase that regulates a number of transcription factors with key roles in cell fate determination. Positive effector of the non-canonical Wnt signaling pathway, acting downstream of WNT5A, MAP3K7/TAK1 and HIPK2. Negative regulator of the canonical Wnt/beta-catenin signaling pathway. Binds to and phosphorylates TCF7L2/TCF4 and LEF1, promoting the dissociation of the TCF7L2/LEF1/beta-catenin complex from DNA, as well as the ubiquitination and subsequent proteolysis of LEF1. Together these effects inhibit the transcriptional activation of canonical Wnt/beta-catenin target genes. Negative regulator of the Notch signaling pathway. Binds to and phosphorylates NOTCH1, thereby preventing the formation of a transcriptionally active ternary complex of NOTCH1, RBPJ/RBPSUH and MAML1. Negative regulator of the MYB family of transcription factors. Phosphorylation of MYB leads to its subsequent proteolysis while phosphorylation of MYBL1 and MYBL2 inhibits their interaction with the coactivator CREBBP. Other transcription factors may also be inhibited by direct phosphorylation of CREBBP itself. Acts downstream of IL6 and MAP3K7/TAK1 to phosphorylate STAT3, which is in turn required for activation of NLK by MAP3K7/TAK1. Upon IL1B stimulus, cooperates with ATF5 to activate the transactivation activity of C/EBP subfamily members. Phosphorylates ATF5 but also stabilizes ATF5 protein levels in a kinase-independent manner. Acts as an inhibitor of the mTORC1 complex in response to osmotic stress by mediating phosphorylation of RPTOR, thereby preventing recruitment of the mTORC1 complex to lysosomes. The sequence is that of Serine/threonine-protein kinase NLK (NLK) from Homo sapiens (Human).